The sequence spans 145 residues: Enhancer of mRNA-decapping protein 2 (145 aa).

Disordered stretches follow at residues 1 to 74 and 89 to 115; these read MGSE…DKAT and PKKK…IDSK. Positions 29-42 are enriched in polar residues; it reads TKTQILVPPTQSLP. Residues 55–73 show a composition bias toward basic and acidic residues; that stretch reads QRREPRERTSKTGHEDDKA. Positions 89–102 are enriched in basic residues; sequence PKKKSCKYKKKKTR.

The protein belongs to the EDC family.

The protein resides in the cytoplasm. It localises to the nucleus. In terms of biological role, mRNA-binding protein which stimulates mRNA decapping by DCP1 and DCP2. This Saccharomyces cerevisiae (strain ATCC 204508 / S288c) (Baker's yeast) protein is Enhancer of mRNA-decapping protein 2 (EDC2).